Reading from the N-terminus, the 80-residue chain is Large ribosomal subunit protein bL31 (80 aa).

4 residues coordinate Zn(2+): Cys-16, Cys-18, Cys-38, and Cys-41.

This sequence belongs to the bacterial ribosomal protein bL31 family. Type A subfamily. As to quaternary structure, part of the 50S ribosomal subunit. Zn(2+) serves as cofactor.

Its function is as follows. Binds the 23S rRNA. In Mycobacterium avium (strain 104), this protein is Large ribosomal subunit protein bL31.